The following is a 372-amino-acid chain: Mitogen-activated protein kinase spk1 (372 aa).

Residues 1–25 (MASATSTPTIADGNSNKESVATSRS) are compositionally biased toward polar residues. The tract at residues 1–29 (MASATSTPTIADGNSNKESVATSRSPHTH) is disordered. In terms of domain architecture, Protein kinase spans 39–327 (YEMINLIGQG…AEEALKHPYV (289 aa)). Residues 45 to 53 (IGQGAYGVV) and K68 each bind ATP. D163 (proton acceptor) is an active-site residue. Residue T199 is modified to Phosphothreonine. Residues 199–201 (TEY) carry the TXY motif. The residue at position 201 (Y201) is a Phosphotyrosine.

This sequence belongs to the protein kinase superfamily. CMGC Ser/Thr protein kinase family. MAP kinase subfamily. Requires Mg(2+) as cofactor. In terms of processing, dually phosphorylated on Thr-199 and Tyr-201, which activates the enzyme.

Its subcellular location is the nucleus. It carries out the reaction L-seryl-[protein] + ATP = O-phospho-L-seryl-[protein] + ADP + H(+). It catalyses the reaction L-threonyl-[protein] + ATP = O-phospho-L-threonyl-[protein] + ADP + H(+). Its activity is regulated as follows. Activated by tyrosine and threonine phosphorylation. In terms of biological role, involved in mating signal transduction pathway. The protein is Mitogen-activated protein kinase spk1 (spk1) of Schizosaccharomyces pombe (strain 972 / ATCC 24843) (Fission yeast).